The following is a 320-amino-acid chain: Ribonuclease Z (320 aa).

His63, His65, Asp67, His68, His141, Asp212, and His270 together coordinate Zn(2+). Asp67 acts as the Proton acceptor in catalysis.

Belongs to the RNase Z family. As to quaternary structure, homodimer. It depends on Zn(2+) as a cofactor.

It carries out the reaction Endonucleolytic cleavage of RNA, removing extra 3' nucleotides from tRNA precursor, generating 3' termini of tRNAs. A 3'-hydroxy group is left at the tRNA terminus and a 5'-phosphoryl group is left at the trailer molecule.. In terms of biological role, zinc phosphodiesterase, which displays some tRNA 3'-processing endonuclease activity. Probably involved in tRNA maturation, by removing a 3'-trailer from precursor tRNA. The polypeptide is Ribonuclease Z (Lacticaseibacillus casei (strain BL23) (Lactobacillus casei)).